We begin with the raw amino-acid sequence, 566 residues long: Serine/threonine-protein kinase haspin homolog (566 aa).

In terms of domain architecture, Protein kinase spans 248–566 (LLNTKKIGEG…HCANYLFNLN (319 aa)). Residues 254–262 (IGEGAYGEV), Lys282, 377–382 (KFAGSD), 418–423 (DLHLGN), and 456–458 (DYT) each bind ATP. Asp418 acts as the Proton acceptor in catalysis.

It belongs to the protein kinase superfamily. Ser/Thr protein kinase family. Haspin subfamily. As to quaternary structure, interacts with pds5 and vtd. Mg(2+) is required as a cofactor.

The protein localises to the nucleus lamina. The protein resides in the chromosome. It localises to the cytoplasm. Its subcellular location is the cytoskeleton. It is found in the spindle. It carries out the reaction L-seryl-[protein] + ATP = O-phospho-L-seryl-[protein] + ADP + H(+). The enzyme catalyses L-threonyl-[protein] + ATP = O-phospho-L-threonyl-[protein] + ADP + H(+). In terms of biological role, serine/threonine-protein kinase that phosphorylates histone H3 at 'Thr-4' (H3T3ph) during mitosis and interphase. Function is essential for chromosome organization during mitosis and genome organization in interphase cells, thus playing a functional role in gene regulation. During mitosis, may act through H3T3ph to both position and modulate activation of AURKB and other components of the chromosomal passenger complex (CPC) at centromeres to ensure proper chromatid cohesion, metaphase alignment and normal progression through the cell cycle. During interphase, associates with the cohesion complex and mediates pds5 binding to chromatin to ensure correct sister chromatid cohesion, chromatin organization, and also functions with Pds5-cohesin to modify Polycomb-dependent homeotic transformations. Function during interphase is required for insulator activity, nuclear compaction, heterochromatin-induced position-effect variegation and PcG-mediated pairing-sensitive silencing. In Drosophila melanogaster (Fruit fly), this protein is Serine/threonine-protein kinase haspin homolog.